Consider the following 439-residue polypeptide: Methylenetetrahydrofolate--tRNA-(uracil-5-)-methyltransferase TrmFO (439 aa).

8 to 13 contributes to the FAD binding site; the sequence is GAGLAG.

Belongs to the MnmG family. TrmFO subfamily. It depends on FAD as a cofactor.

It is found in the cytoplasm. The enzyme catalyses uridine(54) in tRNA + (6R)-5,10-methylene-5,6,7,8-tetrahydrofolate + NADH + H(+) = 5-methyluridine(54) in tRNA + (6S)-5,6,7,8-tetrahydrofolate + NAD(+). It catalyses the reaction uridine(54) in tRNA + (6R)-5,10-methylene-5,6,7,8-tetrahydrofolate + NADPH + H(+) = 5-methyluridine(54) in tRNA + (6S)-5,6,7,8-tetrahydrofolate + NADP(+). Functionally, catalyzes the folate-dependent formation of 5-methyl-uridine at position 54 (M-5-U54) in all tRNAs. This is Methylenetetrahydrofolate--tRNA-(uracil-5-)-methyltransferase TrmFO from Lacticaseibacillus paracasei (strain ATCC 334 / BCRC 17002 / CCUG 31169 / CIP 107868 / KCTC 3260 / NRRL B-441) (Lactobacillus paracasei).